The sequence spans 3746 residues: N-(5-amino-5-carboxypentanoyl)-L-cysteinyl-D-valine synthase (3746 aa).

The interval 299 to 711 (EEVVERHEDK…GRADFQIKLR (413 aa)) is adenylation (A) domain 1. Residues 818-895 (DLRGDTEIAL…RMADLLQNKQ (78 aa)) enclose the Carrier 1 domain. Ser-855 carries the O-(pantetheine 4'-phosphoryl)serine modification. Residues 918 to 1372 (NIYLANSLQQ…YLSSIQLEQL (455 aa)) are condensation (C) domain 1. Residues 1391 to 1801 (FENEASQKPD…GRNDFQVKIR (411 aa)) form an adenylation (A) domain 2 region. The Carrier 2 domain occupies 1902 to 1979 (PPRSEIERSL…AQTHLILNDA (78 aa)). Ser-1939 bears the O-(pantetheine 4'-phosphoryl)serine mark. Residues 1994–2434 (QMIPVSRAQE…SELSAEGINE (441 aa)) form a condensation (C) domain 2 region. Positions 2478 to 2883 (AFLAAEKIAV…GRGDLQIKMR (406 aa)) are adenylation (A) domain 3. The Carrier 3 domain maps to 2991-3066 (PPRNIIEAKM…ALHDHVFMKD (76 aa)). O-(pantetheine 4'-phosphoryl)serine is present on Ser-3026. Residues 3084–3500 (GEAPLLPIQD…NKILDGRASQ (417 aa)) form an epimerase (E) domain region. The tract at residues 3530 to 3732 (TLFLLPPGEG…FSWVGNPQQV (203 aa)) is thioesterase (TE) domain.

It belongs to the NRP synthetase family. Pantetheine 4'-phosphate is required as a cofactor. It depends on Mg(2+) as a cofactor.

It localises to the cytoplasm. The protein localises to the cytosol. The protein resides in the vacuole membrane. The enzyme catalyses L-2-aminoadipate + L-valine + L-cysteine + 3 ATP + H2O = N-[(5S)-5-amino-5-carboxypentanoyl]-L-cysteinyl-D-valine + 3 AMP + 3 diphosphate + 3 H(+). The protein operates within antibiotic biosynthesis; penicillin G biosynthesis; penicillin G from L-alpha-aminoadipate and L-cysteine and L-valine: step 1/3. Functionally, nonribosomal peptide synthetase; part of the gene cluster that mediates the biosynthesis of penicillin, the world's most important antibiotic. The trimodular NRPS acvA produces the tripeptide N-[(5S)-5-amino-5-carboxypentanoyl]-L-cysteinyl-D-valine (LLD-ACV or ACV) via condensation of the 3 residues L-2-aminoadipate, L-cysteine and L-valine. The precursor amino acids for penicillin biosynthesis are withdrawn from the vacuolar amino acid pool by the MFS-type transporter penV. Each of the constituent amino acids of the tripeptide ACV are activated as aminoacyl-adenylates with peptide bonds formed through the participation of amino acid thioester intermediates. The penicillin biosynthesis occurs via 3 enzymatic steps, the first corresponding to the production of the tripeptide N-[(5S)-5-amino-5-carboxypentanoyl]-L-cysteinyl-D-valine (LLD-ACV or ACV) by the NRPS acvA. The tripeptide ACV is then cyclized to isopenicillin N (IPN) by the isopenicillin N synthase ipnA that forms the beta-lactam nucleus. Finally, the alpha-aminoadipyl side chain is exchanged for phenylacetic acid by the isopenicillin N acyltransferase aatA to yield penicillin in the peroxisomal matrix. The protein is N-(5-amino-5-carboxypentanoyl)-L-cysteinyl-D-valine synthase of Penicillium chrysogenum (Penicillium notatum).